Here is a 745-residue protein sequence, read N- to C-terminus: Photosystem I P700 chlorophyll a apoprotein A2 (745 aa).

8 helical membrane-spanning segments follow: residues 49 to 72 (LFATHFGHLAIIFLWASGNVFHIA), 138 to 161 (LYAGAIGLLLLAAVFLFAGWLHLQ), 178 to 202 (LNHHLAGLFGVSSLAWAGHLVHVAI), 276 to 294 (MAHHHLAIAVIFIVAGHMY), 338 to 361 (LHFQLALALACLGVVTSLVAQHMY), 377 to 403 (AALYTHHQYIAGFLMVGAFAHGAIFLV), 425 to 447 (AIISHLSWVSLFLGFHTLGLYVH), and 528 to 546 (FLVHHAIALGLHTTTLILV). Residues Cys-570 and Cys-579 each contribute to the [4Fe-4S] cluster site. 2 helical membrane-spanning segments follow: residues 586–607 (AFYLAMFWMLNTIGWVTFYWHW) and 654–676 (LAVWAWMFLFGHLVWATGFMFLI). Chlorophyll a is bound by residues His-665, Met-673, and Tyr-681. Trp-682 contributes to the phylloquinone binding site. A helical transmembrane segment spans residues 718-738 (LVGLAHFTVGYVLTYAAFVIA).

This sequence belongs to the PsaA/PsaB family. In terms of assembly, the PsaA/B heterodimer binds the P700 chlorophyll special pair and subsequent electron acceptors. PSI consists of a core antenna complex that captures photons, and an electron transfer chain that converts photonic excitation into a charge separation. The cyanobacterial PSI reaction center is composed of one copy each of PsaA,B,C,D,E,F,I,J,K,L,M and X, and forms trimeric complexes. Requires PSI electron transfer chain: 5 chlorophyll a, 1 chlorophyll a', 2 phylloquinones and 3 4Fe-4S clusters. PSI core antenna: 90 chlorophyll a, 22 carotenoids, 3 phospholipids and 1 galactolipid. P700 is a chlorophyll a/chlorophyll a' dimer, A0 is one or more chlorophyll a, A1 is one or both phylloquinones and FX is a shared 4Fe-4S iron-sulfur center. as cofactor.

It is found in the cellular thylakoid membrane. The catalysed reaction is reduced [plastocyanin] + hnu + oxidized [2Fe-2S]-[ferredoxin] = oxidized [plastocyanin] + reduced [2Fe-2S]-[ferredoxin]. PsaA and PsaB bind P700, the primary electron donor of photosystem I (PSI), as well as the electron acceptors A0, A1 and FX. PSI is a plastocyanin/cytochrome c6-ferredoxin oxidoreductase, converting photonic excitation into a charge separation, which transfers an electron from the donor P700 chlorophyll pair to the spectroscopically characterized acceptors A0, A1, FX, FA and FB in turn. Oxidized P700 is reduced on the lumenal side of the thylakoid membrane by plastocyanin or cytochrome c6. In Synechococcus sp. (strain JA-3-3Ab) (Cyanobacteria bacterium Yellowstone A-Prime), this protein is Photosystem I P700 chlorophyll a apoprotein A2.